The sequence spans 537 residues: Putative cysteine ligase BshC (537 aa).

A coiled-coil region spans residues 422 to 450; the sequence is IEKVEGMIEQQRRLYQDLLDEVAGNQNNI.

Belongs to the BshC family.

Its function is as follows. Involved in bacillithiol (BSH) biosynthesis. May catalyze the last step of the pathway, the addition of cysteine to glucosamine malate (GlcN-Mal) to generate BSH. The sequence is that of Putative cysteine ligase BshC from Staphylococcus aureus (strain MRSA252).